Consider the following 308-residue polypeptide: Cyclin-D4-1 (308 aa).

It belongs to the cyclin family. Cyclin D subfamily. In terms of assembly, interacts with CDKA-1, CDKB2-1, KRP4/ICK7, KRP5/ICK3, KRP6/ICK4 and KRP7/ICK5. Expressed in shoot apical meristem, leaf primordia vascular tissues and tapetum of anthers.

In terms of biological role, may activate cell cycle in the root apical meristem (RAM) and promote embryonic root (radicle) protrusion. This Arabidopsis thaliana (Mouse-ear cress) protein is Cyclin-D4-1 (CYCD4-1).